A 1270-amino-acid chain; its full sequence is Breakpoint cluster region protein (1270 aa).

Residue Met-1 is modified to N-acetylmethionine. The interval 1–428 is kinase; it reads MVDSVGFAEA…DGDSTFQGEA (428 aa). A coiled-coil region spans residues 28-55; that stretch reads VGDIEQELERCKASIRRLEQEVNQERFR. A disordered region spans residues 67–173; sequence KKSYDRQRWG…GPAQPGSADA (107 aa). Residues 121-139 are compositionally biased toward low complexity; it reads GSPSKGRSASARRPAAAAS. A phosphoserine mark is found at Ser-122 and Ser-139. Tyr-178 carries the phosphotyrosine; by HCK modification. Residues 198–387 form a binding to ABL SH2-domain region; the sequence is SDRISSLGSQ…QSFDSSSPPT (190 aa). Disordered regions lie at residues 201–249, 295–396, and 412–481; these read ISSL…DYED, KSPL…RHRQ, and TGQI…SGAL. Phosphoserine is present on residues Ser-203, Ser-216, and Ser-237. Residue Tyr-247 is modified to Phosphotyrosine; by FES. 2 stretches are compositionally biased toward low complexity: residues 348–358 and 371–384; these read SSGQSSRVSPS and SPSQNSQQSFDSSS. 3 positions are modified to phosphoserine: Ser-358, Ser-379, and Ser-384. Residue Thr-387 is modified to Phosphothreonine. Phosphoserine occurs at positions 461 and 465. At Arg-473 the chain carries Omega-N-methylarginine. Phosphoserine occurs at positions 475 and 487. A DH domain is found at 497 to 690; sequence MRKWVLSGIL…QNFLSSINEE (194 aa). Tyr-553 is subject to Phosphotyrosine. At Thr-640 the chain carries Phosphothreonine. The residue at position 643 (Tyr-643) is a Phosphotyrosine. Thr-692 is subject to Phosphothreonine. The PH domain maps to 707 to 865; the sequence is QLLKDSFMVE…WRESIREQQK (159 aa). The region spanning 892–1019 is the C2 domain; sequence HHIPLTINKE…QDRDWQRTVI (128 aa). Residues 1053 to 1247 form the Rho-GAP domain; that stretch reads VKIAVVTKRE…VMSQVQVLLY (195 aa). At Ser-1263 the chain carries Phosphoserine.

In terms of assembly, homotetramer. Interacts with PDZK1. Interacts with HCK, FES/FPS, ABL1, PIK3R1 and GRB2. May interact with CCPG1. Interacts with SH2D5. Interacts with DLG4. Post-translationally, autophosphorylated. Phosphorylated by FES/FPS on tyrosine residues, leading to down-regulation of the BCR kinase activity. Phosphorylation at Tyr-178 by HCK is important for interaction with GRB2. As to expression, expressed in brain. In hippocampal subregions, most abundant in the CA1 region and expressed at successively lower levels in the dentate gyrus and the CA3 region.

Its subcellular location is the postsynaptic density. The protein resides in the cell projection. It localises to the dendritic spine. The protein localises to the axon. It is found in the synapse. It catalyses the reaction L-seryl-[protein] + ATP = O-phospho-L-seryl-[protein] + ADP + H(+). It carries out the reaction L-threonyl-[protein] + ATP = O-phospho-L-threonyl-[protein] + ADP + H(+). Functionally, protein with a unique structure having two opposing regulatory activities toward small GTP-binding proteins. The C-terminus is a GTPase-activating protein (GAP) domain which stimulates GTP hydrolysis by RAC1, RAC2 and CDC42. Accelerates the intrinsic rate of GTP hydrolysis of RAC1 or CDC42, leading to down-regulation of the active GTP-bound form. The central Dbl homology (DH) domain functions as guanine nucleotide exchange factor (GEF) that modulates the GTPases CDC42, RHOA and RAC1. Promotes the conversion of CDC42, RHOA and RAC1 from the GDP-bound to the GTP-bound form. The amino terminus contains an intrinsic kinase activity. Functions as an important negative regulator of neuronal RAC1 activity. Regulates macrophage functions such as CSF1-directed motility and phagocytosis through the modulation of RAC1 activity. Plays a major role as a RHOA GEF in keratinocytes being involved in focal adhesion formation and keratinocyte differentiation. This chain is Breakpoint cluster region protein, found in Mus musculus (Mouse).